The following is a 508-amino-acid chain: Cytochrome P450 4A12 (508 aa).

Transmembrane regions (helical) follow at residues 10 to 30 (IFPG…VLLL) and 120 to 140 (FLAP…WFQH). Position 319 (Glu-319) interacts with heme. Position 438 is a phosphoserine (Ser-438). Position 455 (Cys-455) interacts with heme.

It belongs to the cytochrome P450 family. Heme serves as cofactor. As to expression, expressed at proximal straight tubules and preglomerular arteries of the outer medulla as well in the cortex regions of kidney (at protein level).

Its subcellular location is the endoplasmic reticulum membrane. The protein resides in the microsome membrane. The enzyme catalyses an organic molecule + reduced [NADPH--hemoprotein reductase] + O2 = an alcohol + oxidized [NADPH--hemoprotein reductase] + H2O + H(+). The catalysed reaction is dodecanoate + reduced [NADPH--hemoprotein reductase] + O2 = 12-hydroxydodecanoate + oxidized [NADPH--hemoprotein reductase] + H2O + H(+). It carries out the reaction dodecanoate + reduced [NADPH--hemoprotein reductase] + O2 = (11R)-hydroxydodecanoate + oxidized [NADPH--hemoprotein reductase] + H2O + H(+). It catalyses the reaction (5Z,8Z,11Z,14Z)-eicosatetraenoate + reduced [NADPH--hemoprotein reductase] + O2 = 20-hydroxy-(5Z,8Z,11Z,14Z)-eicosatetraenoate + oxidized [NADPH--hemoprotein reductase] + H2O + H(+). The enzyme catalyses prostaglandin A1 + reduced [NADPH--hemoprotein reductase] + O2 = 20-hydroxy prostaglandin A1 + oxidized [NADPH--hemoprotein reductase] + H2O + H(+). It functions in the pathway lipid metabolism; fatty acid metabolism. Its activity is regulated as follows. Activated by cytochrome b5 and phosphatidylserine. Functionally, a cytochrome P450 monooxygenase involved in the metabolism of fatty acids. Catalyzes predominantly the oxidation of the terminal carbon (omega-oxidation) of saturated and unsaturated fatty acids. May act as a major omega-hydroxylase for dodecanoic (lauric) acid in kidney. At preglomerular arteries, may participate in omega-hydroxylation of (5Z,8Z,11Z,14Z)-eicosatetraenoic acid (arachidonate) to 20-hydroxyeicosatetraenoic acid (20-HETE), a signaling molecule acting both as vasoconstrictive and natriuretic with overall effect on arterial blood pressure. Can also catalyze the oxidation of the penultimate carbon (omega-1 oxidation) of fatty acids with lower efficiency, displaying a preference for the (R)-stereoisomer. Mechanistically, uses molecular oxygen inserting one oxygen atom into a substrate, and reducing the second into a water molecule, with two electrons provided by NADPH via cytochrome P450 reductase (NADPH--hemoprotein reductase). In Rattus norvegicus (Rat), this protein is Cytochrome P450 4A12 (Cyp4a12).